The following is a 407-amino-acid chain: Transmembrane protein 184B (407 aa).

Residues 1 to 25 (MTVRGDVLAPDPASPTTAAASPSVS) form a disordered region. Positions 9-25 (APDPASPTTAAASPSVS) are enriched in low complexity. 7 helical membrane-spanning segments follow: residues 40–60 (FLMTTAAQAISGFFVWTALLI), 84–104 (ILFIVPIYAFDSWLSLLFFTN), 121–141 (LVIYNFLSLCYEYLGGESSIM), 178–198 (LQFCVVKPLMAVSTVVLQAFG), 214–234 (VTIIYNISVSLALYALFLFYF), 249–269 (FFMVKSVIFLSFWQGMLLAIL), and 290–310 (VAAGYQDFIICVEMFFAALAL). Residues 369–395 (TLEPGPTWRGGAHGLSRSHSLSGARDN) form a disordered region. Residues S388, S402, and S403 each carry the phosphoserine modification.

It belongs to the TMEM184 family.

Its subcellular location is the membrane. May activate the MAP kinase signaling pathway. The protein is Transmembrane protein 184B (TMEM184B) of Homo sapiens (Human).